A 1595-amino-acid chain; its full sequence is Collagen-like protein 2 (1595 aa).

Asn-87 and Asn-134 each carry an N-linked (GlcNAc...) asparagine; by host glycan. 4 consecutive Collagen-like domains span residues Leu-97–Val-155, Gln-175–Gly-233, Gly-236–Ile-295, and Gly-299–Lys-358. Low complexity predominate over residues Ser-181–Asp-190. 2 disordered regions span residues Ser-181 to Leu-577 and Thr-604 to Gly-1326. 14 stretches are compositionally biased toward basic and acidic residues: residues Gln-191–Lys-200, Lys-209–Lys-448, Tyr-456–Lys-466, Asp-474–Tyr-501, Asp-510–Glu-561, Ile-606–Glu-615, Lys-622–Asp-702, Lys-718–Ile-825, Lys-832–Lys-883, Lys-895–Ile-1041, Lys-1048–Thr-1098, Lys-1107–Lys-1151, Asn-1159–Gln-1250, and Lys-1265–Ile-1300. 3 N-linked (GlcNAc...) asparagine; by host glycosylation sites follow: Asn-274, Asn-280, and Asn-286. Residues Asn-373, Asn-382, Asn-400, and Asn-409 are each glycosylated (N-linked (GlcNAc...) asparagine; by host). Collagen-like domains lie at Gly-380–Lys-559, Gly-608–Asn-907, Gly-920–Lys-1039, Gly-1043–Thr-1102, and Gly-1128–Ser-1307. N-linked (GlcNAc...) asparagine; by host glycans are attached at residues Asn-1345, Asn-1420, and Asn-1545. The segment at Ser-1538–Pro-1585 is disordered. The span at Lys-1558–Pro-1585 shows a compositional bias: gly residues.

In terms of processing, may be hydroxylated on lysine by the viral-encoded procollagen-lysine,2-oxoglutarate 5-dioxygenase.

Its subcellular location is the virion. May participate in the formation of a layer of cross-linked glycosylated fibrils at the viral surface thus giving it a hairy-like appearance. The protein is Collagen-like protein 2 of Acanthamoeba polyphaga (Amoeba).